The primary structure comprises 220 residues: Adapter protein MecA (220 aa).

The protein belongs to the MecA family. Homodimer.

Enables the recognition and targeting of unfolded and aggregated proteins to the ClpC protease or to other proteins involved in proteolysis. This is Adapter protein MecA from Enterococcus faecalis (strain ATCC 700802 / V583).